The sequence spans 204 residues: MITAEMVKELREKTGAGMMDCKKALEDAGGDMDKAIELLRERGLAKAAKKASRVAAEGIVESYIHGNGRIGVLVEINCETDFVARNEEFRQFAKDIAMQIAAANPKYVSREEVPLDVIEKEKTILRQQALNEGKPENVVDRIVEGRLEKFFEEVCLLEQPWIKNPDMKIKDLLTEKIAKIGENIVIRRFARFERGEGIEKAASC.

An involved in Mg(2+) ion dislocation from EF-Tu region spans residues 80 to 83 (TDFV).

It belongs to the EF-Ts family.

The protein resides in the cytoplasm. Associates with the EF-Tu.GDP complex and induces the exchange of GDP to GTP. It remains bound to the aminoacyl-tRNA.EF-Tu.GTP complex up to the GTP hydrolysis stage on the ribosome. This chain is Elongation factor Ts, found in Caldicellulosiruptor bescii (strain ATCC BAA-1888 / DSM 6725 / KCTC 15123 / Z-1320) (Anaerocellum thermophilum).